The chain runs to 257 residues: Imidazole glycerol phosphate synthase subunit HisF (257 aa).

Active-site residues include Asp11 and Asp130.

Belongs to the HisA/HisF family. In terms of assembly, heterodimer of HisH and HisF.

The protein resides in the cytoplasm. It catalyses the reaction 5-[(5-phospho-1-deoxy-D-ribulos-1-ylimino)methylamino]-1-(5-phospho-beta-D-ribosyl)imidazole-4-carboxamide + L-glutamine = D-erythro-1-(imidazol-4-yl)glycerol 3-phosphate + 5-amino-1-(5-phospho-beta-D-ribosyl)imidazole-4-carboxamide + L-glutamate + H(+). It functions in the pathway amino-acid biosynthesis; L-histidine biosynthesis; L-histidine from 5-phospho-alpha-D-ribose 1-diphosphate: step 5/9. In terms of biological role, IGPS catalyzes the conversion of PRFAR and glutamine to IGP, AICAR and glutamate. The HisF subunit catalyzes the cyclization activity that produces IGP and AICAR from PRFAR using the ammonia provided by the HisH subunit. The chain is Imidazole glycerol phosphate synthase subunit HisF from Shewanella sp. (strain W3-18-1).